The primary structure comprises 1233 residues: ATP-dependent helicase/nuclease subunit A (1233 aa).

The UvrD-like helicase ATP-binding domain maps to 3–474 (TKWTEEQKQA…ILLYKNFRSR (472 aa)). Residue 24–31 (AAAGSGKT) participates in ATP binding. Residues 518 to 809 (VTGGAVELHL…RIMSIHKSKG (292 aa)) enclose the UvrD-like helicase C-terminal domain. Residues 533 to 555 (VEEEVEEKEEEKNEEKDFEEEEE) form a disordered region.

The protein belongs to the helicase family. AddA subfamily. Heterodimer of AddA and AddB/RexB. Mg(2+) serves as cofactor.

It catalyses the reaction Couples ATP hydrolysis with the unwinding of duplex DNA by translocating in the 3'-5' direction.. The enzyme catalyses ATP + H2O = ADP + phosphate + H(+). Its function is as follows. The heterodimer acts as both an ATP-dependent DNA helicase and an ATP-dependent, dual-direction single-stranded exonuclease. Recognizes the chi site generating a DNA molecule suitable for the initiation of homologous recombination. The AddA nuclease domain is required for chi fragment generation; this subunit has the helicase and 3' -&gt; 5' nuclease activities. The chain is ATP-dependent helicase/nuclease subunit A from Thermoanaerobacter sp. (strain X514).